The following is a 294-amino-acid chain: Bifunctional protein FolD (294 aa).

NADP(+) contacts are provided by residues 171-173, serine 196, and isoleucine 237; that span reads GRS.

Belongs to the tetrahydrofolate dehydrogenase/cyclohydrolase family. As to quaternary structure, homodimer.

The catalysed reaction is (6R)-5,10-methylene-5,6,7,8-tetrahydrofolate + NADP(+) = (6R)-5,10-methenyltetrahydrofolate + NADPH. It catalyses the reaction (6R)-5,10-methenyltetrahydrofolate + H2O = (6R)-10-formyltetrahydrofolate + H(+). It participates in one-carbon metabolism; tetrahydrofolate interconversion. Catalyzes the oxidation of 5,10-methylenetetrahydrofolate to 5,10-methenyltetrahydrofolate and then the hydrolysis of 5,10-methenyltetrahydrofolate to 10-formyltetrahydrofolate. The polypeptide is Bifunctional protein FolD (Synechocystis sp. (strain ATCC 27184 / PCC 6803 / Kazusa)).